A 319-amino-acid chain; its full sequence is Glutathione synthetase (319 aa).

Residues 127-311 (KIFVTEFADL…VASLLWDAIE (185 aa)) form the ATP-grasp domain. 153 to 209 (RNEMGDIILKPLYGNGGAGVFHSARDDRNFSSLLEMFGQMFREPYIAQEYLPDVRKG) lines the ATP pocket. Mg(2+) is bound by residues Glu282 and Asn284.

This sequence belongs to the prokaryotic GSH synthase family. Requires Mg(2+) as cofactor. Mn(2+) serves as cofactor.

The enzyme catalyses gamma-L-glutamyl-L-cysteine + glycine + ATP = glutathione + ADP + phosphate + H(+). It functions in the pathway sulfur metabolism; glutathione biosynthesis; glutathione from L-cysteine and L-glutamate: step 2/2. This chain is Glutathione synthetase, found in Agrobacterium fabrum (strain C58 / ATCC 33970) (Agrobacterium tumefaciens (strain C58)).